A 477-amino-acid chain; its full sequence is Myc-associated zinc finger protein (477 aa).

Disordered regions lie at residues 59–78 and 121–144; these read AQSP…APAA and TVDT…SAPA. Residues 130–140 show a composition bias toward pro residues; that stretch reads PPAPPPPPPAV. 4 consecutive C2H2-type zinc fingers follow at residues 190-212, 279-301, 307-329, and 337-360; these read YICA…EAIH, HACE…KLSH, YQCP…VRSH, and YNCS…RQVH. At S361 the chain carries Phosphoserine. The C2H2-type 5 zinc-finger motif lies at 366 to 388; it reads FKCEKCEAAFATKDRLRAHTVRH. Residues 392–413 form a C2H2-type 6; atypical zinc finger; it reads VPCHVCGKMLSSAYISDHMKVH.

Interacts with BPTF. As to expression, expressed in Purkinje cells in the brain (at protein level).

Its subcellular location is the nucleus. In terms of biological role, transcriptional regulator. Acts as a transcriptional activator that binds to purine-rich GAGA sites found in the promoter of many genes including insulin I and II and islet amyloid polypeptide. In Mus musculus (Mouse), this protein is Myc-associated zinc finger protein (Maz).